A 328-amino-acid chain; its full sequence is Ferredoxin--NADP reductase 2 (328 aa).

FAD contacts are provided by Glu37, Gln45, Tyr50, Val90, Phe124, Asp285, and Thr325.

It belongs to the ferredoxin--NADP reductase type 2 family. In terms of assembly, homodimer. FAD serves as cofactor.

It catalyses the reaction 2 reduced [2Fe-2S]-[ferredoxin] + NADP(+) + H(+) = 2 oxidized [2Fe-2S]-[ferredoxin] + NADPH. The chain is Ferredoxin--NADP reductase 2 from Latilactobacillus sakei subsp. sakei (strain 23K) (Lactobacillus sakei subsp. sakei).